We begin with the raw amino-acid sequence, 261 residues long: Imidazole glycerol phosphate synthase subunit HisF (261 aa).

Residues aspartate 11 and aspartate 130 contribute to the active site.

The protein belongs to the HisA/HisF family. Heterodimer of HisH and HisF.

It is found in the cytoplasm. The catalysed reaction is 5-[(5-phospho-1-deoxy-D-ribulos-1-ylimino)methylamino]-1-(5-phospho-beta-D-ribosyl)imidazole-4-carboxamide + L-glutamine = D-erythro-1-(imidazol-4-yl)glycerol 3-phosphate + 5-amino-1-(5-phospho-beta-D-ribosyl)imidazole-4-carboxamide + L-glutamate + H(+). It functions in the pathway amino-acid biosynthesis; L-histidine biosynthesis; L-histidine from 5-phospho-alpha-D-ribose 1-diphosphate: step 5/9. In terms of biological role, IGPS catalyzes the conversion of PRFAR and glutamine to IGP, AICAR and glutamate. The HisF subunit catalyzes the cyclization activity that produces IGP and AICAR from PRFAR using the ammonia provided by the HisH subunit. The polypeptide is Imidazole glycerol phosphate synthase subunit HisF (Jannaschia sp. (strain CCS1)).